The primary structure comprises 782 residues: Large T antigen (782 aa).

N-acetylmethionine; by host is present on M1. The 64-residue stretch at 12-75 (RLLELLKLPR…VYNLRMNLGG (64 aa)) folds into the J domain. Disordered regions lie at residues 74 to 97 (GGTG…GHSP) and 145 to 291 (YEEP…APSD). Basic and acidic residues predominate over residues 85 to 97 (TAERGTEESGHSP). Residues 142–146 (LFCYE) carry the LXCXE motif motif. Residues 148 to 161 (PLLSPNPSSPTDTP) are compositionally biased toward low complexity. The segment covering 199–209 (ATGGGGGGVHA) has biased composition (gly residues). 2 stretches are compositionally biased toward low complexity: residues 233 to 247 (SQGG…DSSG) and 264 to 274 (ESYSQSCSQSS). Residue T278 is modified to Phosphothreonine; by host. The Nuclear localization signal motif lies at 279–286 (PPKKARED). The T-ag OBD DNA-binding region spans 293-407 (PSSLTGYLSH…TENKPGLHQF (115 aa)). The T-ag D1-type zinc-finger motif lies at 416-510 (QKAVDWIMVA…RRLKLVECTR (95 aa)). Positions 453, 456, 466, and 470 each coordinate Zn(2+). The 161-residue stretch at 549-709 (DFPQTLFKML…PHLAQSLEKC (161 aa)) folds into the SF3 helicase domain. 575–582 (GPVNSGKT) contacts ATP.

Forms homohexamers in the presence of ATP. Interacts with host HDAC1. Interacts (via LXCXE domain) with host RB1; the interaction induces the aberrant dissociation of RB1-E2F1 complex thereby disrupting RB1's activity. Interacts (via LXCXE domain) with host pRB-related proteins RBL1 and RBL2. Interacts (via C-terminus) with host TOP1 and POLA1 allowing DNA replication. Interacts with host preinitiation complex components TBP, TFIIA and TFIID to regulate transcription initiation. Mg(2+) is required as a cofactor. In terms of processing, phosphorylated on both serine and threonine residues. Small t antigen inhibits the dephosphorylation by the AC form of PP2A. Post-translationally, O-Glycosylated near the C-terminal region. Acetylated by CBP in a TP53-dependent manner.

It localises to the host nucleus. The catalysed reaction is Couples ATP hydrolysis with the unwinding of duplex DNA by translocating in the 3'-5' direction.. It carries out the reaction ATP + H2O = ADP + phosphate + H(+). Functionally, isoform large T antigen is a key early protein essential for both driving viral replication and inducing cellular transformation. Plays a role in viral genome replication by driving entry of quiescent cells into the cell cycle and by autoregulating the synthesis of viral early mRNA. Displays highly oncogenic activities by corrupting the host cellular checkpoint mechanisms that guard cell division and the transcription, replication, and repair of DNA. Participates in the modulation of cellular gene expression preceeding viral DNA replication. This step involves binding to host key cell cycle regulators retinoblastoma protein RB1/pRb and TP53. Induces the disassembly of host E2F1 transcription factors from RB1, thus promoting transcriptional activation of E2F1-regulated S-phase genes. Inhibits host TP53 binding to DNA, abrogating the ability of TP53 to stimulate gene expression. Plays the role of a TFIID-associated factor (TAF) in transcription initiation for all three RNA polymerases, by stabilizing the TBP-TFIIA complex on promoters. Initiates viral DNA replication and unwinding via interactions with the viral origin of replication. Binds two adjacent sites in the SV40 origin. The replication fork movement is facilitated by Large T antigen helicase activity. Has processive 3'-5' DNA helicase activity which requires a short 3' single-stranded region and ATP. Activates the transcription of viral late mRNA, through host TBP and TFIIA stabilization. Interferes with histone deacetylation mediated by HDAC1, leading to activation of transcription. The sequence is that of Large T antigen from Mus musculus (Mouse).